The primary structure comprises 267 residues: Glucosamine-6-phosphate deaminase (267 aa).

Aspartate 72 serves as the catalytic Proton acceptor; for enolization step. Aspartate 141 functions as the For ring-opening step in the catalytic mechanism. Histidine 143 serves as the catalytic Proton acceptor; for ring-opening step. The For ring-opening step role is filled by glutamate 148.

The protein belongs to the glucosamine/galactosamine-6-phosphate isomerase family. NagB subfamily. As to quaternary structure, homohexamer.

The enzyme catalyses alpha-D-glucosamine 6-phosphate + H2O = beta-D-fructose 6-phosphate + NH4(+). It functions in the pathway amino-sugar metabolism; N-acetylneuraminate degradation; D-fructose 6-phosphate from N-acetylneuraminate: step 5/5. Its activity is regulated as follows. Allosterically activated by N-acetylglucosamine 6-phosphate (GlcNAc6P). Its function is as follows. Catalyzes the reversible isomerization-deamination of glucosamine 6-phosphate (GlcN6P) to form fructose 6-phosphate (Fru6P) and ammonium ion. The polypeptide is Glucosamine-6-phosphate deaminase (Actinobacillus pleuropneumoniae serotype 5b (strain L20)).